The following is a 469-amino-acid chain: Glutamate--tRNA ligase (469 aa).

Positions 9-19 match the 'HIGH' region motif; the sequence is PSPTGFLHVGG. Cysteine 98, cysteine 100, cysteine 125, and aspartate 127 together coordinate Zn(2+). Positions 236-240 match the 'KMSKS' region motif; the sequence is KLSKR. Residue lysine 239 coordinates ATP.

The protein belongs to the class-I aminoacyl-tRNA synthetase family. Glutamate--tRNA ligase type 1 subfamily. In terms of assembly, monomer. Zn(2+) is required as a cofactor.

It localises to the cytoplasm. It catalyses the reaction tRNA(Glu) + L-glutamate + ATP = L-glutamyl-tRNA(Glu) + AMP + diphosphate. Functionally, catalyzes the attachment of glutamate to tRNA(Glu) in a two-step reaction: glutamate is first activated by ATP to form Glu-AMP and then transferred to the acceptor end of tRNA(Glu). This is Glutamate--tRNA ligase from Shewanella putrefaciens (strain CN-32 / ATCC BAA-453).